The primary structure comprises 563 residues: Arginine--tRNA ligase (563 aa).

The 'HIGH' region motif lies at 121 to 131 (PNIAKPFSIGH).

The protein belongs to the class-I aminoacyl-tRNA synthetase family. Monomer.

It localises to the cytoplasm. It catalyses the reaction tRNA(Arg) + L-arginine + ATP = L-arginyl-tRNA(Arg) + AMP + diphosphate. The polypeptide is Arginine--tRNA ligase (Streptococcus pneumoniae serotype 19F (strain G54)).